A 753-amino-acid polypeptide reads, in one-letter code: Photosystem I P700 chlorophyll a apoprotein A1 (753 aa).

8 consecutive transmembrane segments (helical) span residues 73–96 (IFSAHFGHLSIIFVWISGMIFHAA), 159–182 (LYSAAIGALVAAVVMMYAGYYHYH), 198–222 (MTHHLIVLLGLGNLAWTGHLIHVSL), 294–312 (IAHHHLALAVMYIIAGHMY), 349–372 (WHAQLAINLATWGSFSIIVAHHMY), 388–414 (LNLFVHHMWIGGFLIVGGAAHAAIFMV), 436–458 (TIISHLNWVCIFLGFHSFGLYIH), and 534–552 (FMIHHIHAFQIHVTVLILI). The [4Fe-4S] cluster site is built by Cys576 and Cys585. 2 helical membrane-spanning segments follow: residues 592 to 613 (HIFLGLFWMYNCISIVNFHFFW) and 667 to 689 (LSAYGILFLGAHFIWAFSLMFLF). Position 678 (His678) interacts with chlorophyll a'. Chlorophyll a contacts are provided by Met686 and Tyr694. Trp695 contacts phylloquinone. The helical transmembrane segment at 727 to 747 (AVGLGHYLLGGIVTSWSFYLA) threads the bilayer.

Belongs to the PsaA/PsaB family. As to quaternary structure, the PsaA/B heterodimer binds the P700 chlorophyll special pair and subsequent electron acceptors. PSI consists of a core antenna complex that captures photons, and an electron transfer chain that converts photonic excitation into a charge separation. The cyanobacterial PSI reaction center is composed of one copy each of PsaA,B,C,D,E,F,I,J,K,L,M and X, and forms trimeric complexes. It depends on PSI electron transfer chain: 5 chlorophyll a, 1 chlorophyll a', 2 phylloquinones and 3 4Fe-4S clusters. PSI core antenna: 90 chlorophyll a, 22 carotenoids, 3 phospholipids and 1 galactolipid. P700 is a chlorophyll a/chlorophyll a' dimer, A0 is one or more chlorophyll a, A1 is one or both phylloquinones and FX is a shared 4Fe-4S iron-sulfur center. as a cofactor.

It is found in the cellular thylakoid membrane. It carries out the reaction reduced [plastocyanin] + hnu + oxidized [2Fe-2S]-[ferredoxin] = oxidized [plastocyanin] + reduced [2Fe-2S]-[ferredoxin]. PsaA and PsaB bind P700, the primary electron donor of photosystem I (PSI), as well as the electron acceptors A0, A1 and FX. PSI is a plastocyanin/cytochrome c6-ferredoxin oxidoreductase, converting photonic excitation into a charge separation, which transfers an electron from the donor P700 chlorophyll pair to the spectroscopically characterized acceptors A0, A1, FX, FA and FB in turn. Oxidized P700 is reduced on the lumenal side of the thylakoid membrane by plastocyanin or cytochrome c6. This is Photosystem I P700 chlorophyll a apoprotein A1 from Acaryochloris marina (strain MBIC 11017).